We begin with the raw amino-acid sequence, 492 residues long: Glutamyl-tRNA(Gln) amidotransferase subunit A (492 aa).

Residues lysine 79 and serine 154 each act as charge relay system in the active site. The active-site Acyl-ester intermediate is the serine 178.

It belongs to the amidase family. GatA subfamily. As to quaternary structure, heterotrimer of A, B and C subunits.

It carries out the reaction L-glutamyl-tRNA(Gln) + L-glutamine + ATP + H2O = L-glutaminyl-tRNA(Gln) + L-glutamate + ADP + phosphate + H(+). Its function is as follows. Allows the formation of correctly charged Gln-tRNA(Gln) through the transamidation of misacylated Glu-tRNA(Gln) in organisms which lack glutaminyl-tRNA synthetase. The reaction takes place in the presence of glutamine and ATP through an activated gamma-phospho-Glu-tRNA(Gln). This is Glutamyl-tRNA(Gln) amidotransferase subunit A from Acinetobacter baumannii (strain AB0057).